The following is a 204-amino-acid chain: Large ribosomal subunit protein uL4 (204 aa).

Residues 49–74 (AKKRGEVSGGGKKPWSQKGGGRARAG) are disordered. Gly residues predominate over residues 55-71 (VSGGGKKPWSQKGGGRA).

Belongs to the universal ribosomal protein uL4 family. Part of the 50S ribosomal subunit.

Its function is as follows. One of the primary rRNA binding proteins, this protein initially binds near the 5'-end of the 23S rRNA. It is important during the early stages of 50S assembly. It makes multiple contacts with different domains of the 23S rRNA in the assembled 50S subunit and ribosome. In terms of biological role, forms part of the polypeptide exit tunnel. The polypeptide is Large ribosomal subunit protein uL4 (Wolinella succinogenes (strain ATCC 29543 / DSM 1740 / CCUG 13145 / JCM 31913 / LMG 7466 / NCTC 11488 / FDC 602W) (Vibrio succinogenes)).